Reading from the N-terminus, the 244-residue chain is 1-(5-phosphoribosyl)-5-[(5-phosphoribosylamino)methylideneamino] imidazole-4-carboxamide isomerase (244 aa).

Asp-8 functions as the Proton acceptor in the catalytic mechanism. The active-site Proton donor is Asp-131.

Belongs to the HisA/HisF family.

The protein localises to the cytoplasm. It carries out the reaction 1-(5-phospho-beta-D-ribosyl)-5-[(5-phospho-beta-D-ribosylamino)methylideneamino]imidazole-4-carboxamide = 5-[(5-phospho-1-deoxy-D-ribulos-1-ylimino)methylamino]-1-(5-phospho-beta-D-ribosyl)imidazole-4-carboxamide. The protein operates within amino-acid biosynthesis; L-histidine biosynthesis; L-histidine from 5-phospho-alpha-D-ribose 1-diphosphate: step 4/9. The chain is 1-(5-phosphoribosyl)-5-[(5-phosphoribosylamino)methylideneamino] imidazole-4-carboxamide isomerase from Thermomicrobium roseum (strain ATCC 27502 / DSM 5159 / P-2).